Here is a 143-residue protein sequence, read N- to C-terminus: Peptide methionine sulfoxide reductase MsrB (143 aa).

Residues 16-139 (DAELRRRLTP…NSAALNFESR (124 aa)) enclose the MsrB domain. Residues cysteine 55, cysteine 58, cysteine 104, and cysteine 107 each coordinate Zn(2+). Cysteine 128 acts as the Nucleophile in catalysis.

It belongs to the MsrB Met sulfoxide reductase family. Requires Zn(2+) as cofactor.

The catalysed reaction is L-methionyl-[protein] + [thioredoxin]-disulfide + H2O = L-methionyl-(R)-S-oxide-[protein] + [thioredoxin]-dithiol. The sequence is that of Peptide methionine sulfoxide reductase MsrB from Burkholderia orbicola (strain MC0-3).